The chain runs to 505 residues: Elsinochrome transporter 1 (505 aa).

Positions 1–10 (MALSGLGSGP) are enriched in gly residues. The disordered stretch occupies residues 1 to 25 (MALSGLGSGPEGNPNNHQGKAIPTL). The chain crosses the membrane as a helical span at residues 35–55 (FLFSWVSFLVPFWSWYPFSPL). N-linked (GlcNAc...) asparagine glycans are attached at residues N64 and N80. The interval 221–295 (DTPTGAGKPP…TEKGESLPLT (75 aa)) is disordered. A compositionally biased stretch (low complexity) spans 255–267 (TPSSPDRSSSTNS). 6 helical membrane passes run 313 to 333 (VIFSGPTLVLGACYFCTFGAE), 348 to 368 (LGLGLQNAGNLAAIFGLLNIV), 391 to 411 (KALLHTYCVMTGVFCIAIGLA), 417 to 437 (ATLVGLVSGGLAFFLEGANGL), 449 to 469 (VVSGFTGACGNLGGIVFAIVF), and 479 to 499 (VFWIIGAIIIGLQVATCWIKP).

Belongs to the major facilitator superfamily. Nitrate/nitrite porter (TC 2.A.1.8) family.

It is found in the cell membrane. Major facilitator-type transporter; part of the gene cluster that mediates the biosynthesis of elsinochromes, pigments consisting of at least four interconvertible tautomers (A, B, C and D) that have a core phenolic quinone to which various side chains are attached and which play an important role in fungal pathogenesis. Once elsinochrome is synthesized, it must be exported outside the fungal cells, which is probably accomplished by the ECT1 transporter, to avoid toxicity. The chain is Elsinochrome transporter 1 from Elsinoe fawcettii (Citrus scab fungus).